The sequence spans 125 residues: MSDQHDERRRFHRIAFDADSEILQGERRWEVLLHDVSLHGILVGQPQDWNGDPQRPFEARLYLGLDVLIRMEISLAWARDGLLGFECQHIDLDSISHLRRLVELNLGDEELLERELALLVSAHDD.

6–13 is a binding site for 3',3'-c-di-GMP; that stretch reads DERRRFHR. In terms of domain architecture, PilZ spans 7 to 103; the sequence is ERRRFHRIAF…SISHLRRLVE (97 aa). The short motif at 9–13 is the RXXXR motif; surrounds the surface of the c-di-GMP binding site element; it reads RRFHR. A DXSXXG motif; surrounds the surface of the c-di-GMP binding site motif is present at residues 35–40; it reads DVSLHG. Tryptophan 77 contributes to the 3',3'-c-di-GMP binding site.

Monomer in both c-di-GMP-bound and free forms.

In terms of biological role, binds the second messenger bis-(3'-5') cyclic dimeric guanosine monophosphate (c-di-GMP). Can bind two c-di-GMP molecules per monomer. May play a role in bacterial second-messenger regulated processes. Binding to c-di-GMP induces a conformational change of the C- and N-termini resulting in the exposure of a highly negative surface on one side of the protein to a possible effector protein. This Pseudomonas aeruginosa (strain ATCC 15692 / DSM 22644 / CIP 104116 / JCM 14847 / LMG 12228 / 1C / PRS 101 / PAO1) protein is Cyclic diguanosine monophosphate-binding protein PA4608.